A 339-amino-acid polypeptide reads, in one-letter code: tRNA N6-adenosine threonylcarbamoyltransferase (339 aa).

Residues His117 and His121 each coordinate Fe cation. Substrate is bound by residues 140–144 (VVSGG), Asp173, Gly186, and Asn279. Fe cation is bound at residue Asp307.

Belongs to the KAE1 / TsaD family. The cofactor is Fe(2+).

The protein resides in the cytoplasm. It catalyses the reaction L-threonylcarbamoyladenylate + adenosine(37) in tRNA = N(6)-L-threonylcarbamoyladenosine(37) in tRNA + AMP + H(+). Functionally, required for the formation of a threonylcarbamoyl group on adenosine at position 37 (t(6)A37) in tRNAs that read codons beginning with adenine. Is involved in the transfer of the threonylcarbamoyl moiety of threonylcarbamoyl-AMP (TC-AMP) to the N6 group of A37, together with TsaE and TsaB. TsaD likely plays a direct catalytic role in this reaction. In Syntrophomonas wolfei subsp. wolfei (strain DSM 2245B / Goettingen), this protein is tRNA N6-adenosine threonylcarbamoyltransferase.